Here is a 380-residue protein sequence, read N- to C-terminus: Cytochrome b (380 aa).

4 helical membrane passes run 34–54 (FGSL…LLAM), 78–99 (WLIR…YMHI), 114–134 (WNTG…GYVL), and 179–199 (FFAL…IHLT). Heme b is bound by residues histidine 84 and histidine 98. Residues histidine 183 and histidine 197 each coordinate heme b. Histidine 202 serves as a coordination point for a ubiquinone. A run of 4 helical transmembrane segments spans residues 227 to 247 (LKDI…ALFT), 289 to 309 (LGGV…PLLH), 321 to 341 (LSQS…WVGS), and 348 to 368 (FIII…ILLP).

It belongs to the cytochrome b family. The cytochrome bc1 complex contains 11 subunits: 3 respiratory subunits (MT-CYB, CYC1 and UQCRFS1), 2 core proteins (UQCRC1 and UQCRC2) and 6 low-molecular weight proteins (UQCRH/QCR6, UQCRB/QCR7, UQCRQ/QCR8, UQCR10/QCR9, UQCR11/QCR10 and a cleavage product of UQCRFS1). This cytochrome bc1 complex then forms a dimer. Heme b is required as a cofactor.

Its subcellular location is the mitochondrion inner membrane. Functionally, component of the ubiquinol-cytochrome c reductase complex (complex III or cytochrome b-c1 complex) that is part of the mitochondrial respiratory chain. The b-c1 complex mediates electron transfer from ubiquinol to cytochrome c. Contributes to the generation of a proton gradient across the mitochondrial membrane that is then used for ATP synthesis. This chain is Cytochrome b (MT-CYB), found in Falco peregrinus (Peregrine falcon).